Reading from the N-terminus, the 209-residue chain is Ribulose-phosphate 3-epimerase (209 aa).

Serine 8 lines the substrate pocket. 4 residues coordinate a divalent metal cation: histidine 33, aspartate 35, histidine 64, and aspartate 170. Aspartate 35 acts as the Proton acceptor in catalysis. Residues histidine 64, 170–172, and 191–192 each bind substrate; these read DGG and GS. Residue aspartate 170 is the Proton donor of the active site.

Belongs to the ribulose-phosphate 3-epimerase family. A divalent metal cation is required as a cofactor.

It catalyses the reaction D-ribulose 5-phosphate = D-xylulose 5-phosphate. Its pathway is carbohydrate degradation. In terms of biological role, catalyzes the reversible epimerization of D-ribulose 5-phosphate to D-xylulose 5-phosphate. The sequence is that of Ribulose-phosphate 3-epimerase from Mycoplasma genitalium (strain ATCC 33530 / DSM 19775 / NCTC 10195 / G37) (Mycoplasmoides genitalium).